The following is a 486-amino-acid chain: Cytochrome P450 monooxygenase aclC (486 aa).

Cys-427 contributes to the heme binding site.

This sequence belongs to the cytochrome P450 family. Heme serves as cofactor.

It participates in mycotoxin biosynthesis. Cytochrome P450 monooxygenase; part of the gene cluster that mediates the biosynthesis of aspirochlorine (or antibiotic A30641), an unusual halogenated spiro compound with distinctive antifungal properties due to selective inhibition of protein biosynthesis, and which is also active against bacteria, viruses, and murine tumor cells. The non-ribosomal peptide synthetase (NRPS) aclP is responsible the formation of the diketopiperazine (DKP) core from the condensation of 2 phenylalanine residues. One Phe residue is tailored into chlorotyrosine by hydroxylation and chlorination, whereas the second Phe undergoes an unprecedented C-C bond cleavage to be converted into glycine. After formation of the DKP, sulfur is incorporated into the DKP by conjugation with glutathione by aclG, followed by its stepwise degradation to the thiol by aclI, aclJ and aclK, and the dithiol oxidation by aclT. In addition, oxygenases (aclB, aclC, aclL and aclO) and O-methyltransferases (aclM and aclU) act as tailoring enzymes to produce the intermediate dechloroaspirochlorine. Ultimately, chlorination of dechloroaspirochlorine by the halogenase aclH is the last step in the aspirochlorine pathway. This chain is Cytochrome P450 monooxygenase aclC, found in Aspergillus oryzae (strain ATCC 42149 / RIB 40) (Yellow koji mold).